A 328-amino-acid chain; its full sequence is Homeobox protein Hox-C13 (328 aa).

The segment at 23–48 (AAESGSGGGGGGGGAGGAGGGCSGAS) is disordered. The span at 27-45 (GSGGGGGGGGAGGAGGGCS) shows a compositional bias: gly residues. A DNA-binding region (homeobox) is located at residues 258–317 (GRKKRVPYTKVQLKELEKEYAASKFITKEKRRRISATTNLSERQVTIWFQNRRVKEKKVV).

Belongs to the Abd-B homeobox family. As to expression, expressed in differentiating keratinocytes. In the hair follicle lower matrix, expressed in all 3 hair shaft-forming compartments, i.e. cuticle, cortex and medulla. Expression stops sharply at the boundary with the germinal matrix compartment.

It localises to the nucleus. Transcription factor which plays a role in hair follicle differentiation. Regulates FOXQ1 expression and that of other hair-specific genes. The chain is Homeobox protein Hox-C13 (Hoxc13) from Mus musculus (Mouse).